Consider the following 163-residue polypeptide: Probable chemoreceptor glutamine deamidase CheD (163 aa).

It belongs to the CheD family.

The enzyme catalyses L-glutaminyl-[protein] + H2O = L-glutamyl-[protein] + NH4(+). Probably deamidates glutamine residues to glutamate on methyl-accepting chemotaxis receptors (MCPs), playing an important role in chemotaxis. This Borrelia garinii subsp. bavariensis (strain ATCC BAA-2496 / DSM 23469 / PBi) (Borreliella bavariensis) protein is Probable chemoreceptor glutamine deamidase CheD.